The primary structure comprises 123 residues: Large ribosomal subunit protein bL19 (123 aa).

The protein belongs to the bacterial ribosomal protein bL19 family.

Its function is as follows. This protein is located at the 30S-50S ribosomal subunit interface and may play a role in the structure and function of the aminoacyl-tRNA binding site. The chain is Large ribosomal subunit protein bL19 (rplS) from Treponema pallidum (strain Nichols).